A 310-amino-acid polypeptide reads, in one-letter code: Aspartate carbamoyltransferase catalytic subunit (310 aa).

Residues arginine 58 and threonine 59 each coordinate carbamoyl phosphate. Lysine 86 provides a ligand contact to L-aspartate. Residues arginine 108, histidine 136, and glutamine 139 each contribute to the carbamoyl phosphate site. Residues arginine 169 and arginine 224 each coordinate L-aspartate. 2 residues coordinate carbamoyl phosphate: glycine 265 and proline 266.

It belongs to the aspartate/ornithine carbamoyltransferase superfamily. ATCase family. In terms of assembly, heterododecamer (2C3:3R2) of six catalytic PyrB chains organized as two trimers (C3), and six regulatory PyrI chains organized as three dimers (R2).

The catalysed reaction is carbamoyl phosphate + L-aspartate = N-carbamoyl-L-aspartate + phosphate + H(+). It participates in pyrimidine metabolism; UMP biosynthesis via de novo pathway; (S)-dihydroorotate from bicarbonate: step 2/3. In terms of biological role, catalyzes the condensation of carbamoyl phosphate and aspartate to form carbamoyl aspartate and inorganic phosphate, the committed step in the de novo pyrimidine nucleotide biosynthesis pathway. The protein is Aspartate carbamoyltransferase catalytic subunit of Geobacter sp. (strain M21).